A 122-amino-acid chain; its full sequence is Large ribosomal subunit protein eL34 (122 aa).

The protein belongs to the eukaryotic ribosomal protein eL34 family.

This is Large ribosomal subunit protein eL34 (rpl34) from Dictyostelium discoideum (Social amoeba).